Reading from the N-terminus, the 427-residue chain is Enolase 2 (427 aa).

Position 163 (glutamine 163) interacts with (2R)-2-phosphoglycerate. Glutamate 205 serves as the catalytic Proton donor. Aspartate 242, glutamate 285, and aspartate 312 together coordinate Mg(2+). (2R)-2-phosphoglycerate-binding residues include lysine 337, arginine 366, serine 367, and lysine 388. Catalysis depends on lysine 337, which acts as the Proton acceptor.

The protein belongs to the enolase family. Component of the RNA degradosome, a multiprotein complex involved in RNA processing and mRNA degradation. It depends on Mg(2+) as a cofactor.

The protein resides in the cytoplasm. The protein localises to the secreted. It is found in the cell surface. It carries out the reaction (2R)-2-phosphoglycerate = phosphoenolpyruvate + H2O. It participates in carbohydrate degradation; glycolysis; pyruvate from D-glyceraldehyde 3-phosphate: step 4/5. Catalyzes the reversible conversion of 2-phosphoglycerate (2-PG) into phosphoenolpyruvate (PEP). It is essential for the degradation of carbohydrates via glycolysis. The chain is Enolase 2 from Methylococcus capsulatus (strain ATCC 33009 / NCIMB 11132 / Bath).